Consider the following 476-residue polypeptide: Bifunctional protein HldE (476 aa).

A ribokinase region spans residues 1–319 (MKVSLPAFEK…EALALHHGES (319 aa)). Residue 195–198 (NMSE) coordinates ATP. Residue Asp264 is part of the active site. Residues 345–476 (MTNGCFDILH…AIIQNIMANQ (132 aa)) are cytidylyltransferase.

This sequence in the N-terminal section; belongs to the carbohydrate kinase PfkB family. In the C-terminal section; belongs to the cytidylyltransferase family. Homodimer.

The catalysed reaction is D-glycero-beta-D-manno-heptose 7-phosphate + ATP = D-glycero-beta-D-manno-heptose 1,7-bisphosphate + ADP + H(+). It catalyses the reaction D-glycero-beta-D-manno-heptose 1-phosphate + ATP + H(+) = ADP-D-glycero-beta-D-manno-heptose + diphosphate. It functions in the pathway nucleotide-sugar biosynthesis; ADP-L-glycero-beta-D-manno-heptose biosynthesis; ADP-L-glycero-beta-D-manno-heptose from D-glycero-beta-D-manno-heptose 7-phosphate: step 1/4. It participates in nucleotide-sugar biosynthesis; ADP-L-glycero-beta-D-manno-heptose biosynthesis; ADP-L-glycero-beta-D-manno-heptose from D-glycero-beta-D-manno-heptose 7-phosphate: step 3/4. Its function is as follows. Catalyzes the phosphorylation of D-glycero-D-manno-heptose 7-phosphate at the C-1 position to selectively form D-glycero-beta-D-manno-heptose-1,7-bisphosphate. Functionally, catalyzes the ADP transfer from ATP to D-glycero-beta-D-manno-heptose 1-phosphate, yielding ADP-D-glycero-beta-D-manno-heptose. In Shewanella baltica (strain OS185), this protein is Bifunctional protein HldE.